The following is a 299-amino-acid chain: Oxygen-dependent coproporphyrinogen-III oxidase (299 aa).

Ser92 serves as a coordination point for substrate. Residues His96 and His106 each contribute to the a divalent metal cation site. The active-site Proton donor is His106. Residue 108 to 110 (NVR) coordinates substrate. Residues His145 and His175 each contribute to the a divalent metal cation site. The segment at 240–275 (YVEFNLVWDRGTLFGLQTGGRTESILMSMPPLVRWE) is important for dimerization. 258–260 (GGR) is a binding site for substrate.

The protein belongs to the aerobic coproporphyrinogen-III oxidase family. Homodimer. A divalent metal cation is required as a cofactor.

Its subcellular location is the cytoplasm. The enzyme catalyses coproporphyrinogen III + O2 + 2 H(+) = protoporphyrinogen IX + 2 CO2 + 2 H2O. It participates in porphyrin-containing compound metabolism; protoporphyrin-IX biosynthesis; protoporphyrinogen-IX from coproporphyrinogen-III (O2 route): step 1/1. Involved in the heme biosynthesis. Catalyzes the aerobic oxidative decarboxylation of propionate groups of rings A and B of coproporphyrinogen-III to yield the vinyl groups in protoporphyrinogen-IX. The polypeptide is Oxygen-dependent coproporphyrinogen-III oxidase (Salmonella typhi).